A 649-amino-acid chain; its full sequence is Archaeal Lon protease (649 aa).

The Cytoplasmic portion of the chain corresponds to 1–114 (MFSIKFKTTE…KLDFKAPSST (114 aa)). 47 to 54 (GDPGVGKS) is a binding site for ATP. A helical transmembrane segment spans residues 115–135 (TLLLIMIGAILLSEYLLKYLP). The Extracellular portion of the chain corresponds to 136–138 (QNY). The chain crosses the membrane as a helical span at residues 139-159 (LLAAVTITALIVLIFGFVIIL). Topologically, residues 160 to 649 (TSIMGASRAS…DNRGGAERFN (490 aa)) are cytoplasmic. The region spanning 456–639 (EPKVGVIYGL…DEIVPLVFDL (184 aa)) is the Lon proteolytic domain. Active-site residues include S550 and K593.

Belongs to the peptidase S16 family. Archaeal LonB subfamily. As to quaternary structure, homohexamer. Organized in a ring with a central cavity.

The protein localises to the cell membrane. In terms of biological role, ATP-dependent serine protease that mediates the selective degradation of mutant and abnormal proteins as well as certain short-lived regulatory proteins. Degrades polypeptides processively. The chain is Archaeal Lon protease from Methanocaldococcus jannaschii (strain ATCC 43067 / DSM 2661 / JAL-1 / JCM 10045 / NBRC 100440) (Methanococcus jannaschii).